Reading from the N-terminus, the 464-residue chain is MDVAGKKVTVLGGGKSGVAAALLLQQLGATVLLSEHGALSSEAMQRLQAAHIAYEANGHSEQIYSADFCVLSPGIPPTAPVVQQMEAHSIPLYSEIEVASCFCKARMVGITGTDGKTTTSTLIHTLCEADGKRHGYRSYSVGNSGIPFSSMVLAMQPNDVAVIELSSYQLERSISFHPQVSLITNITPDHLDRYGQNMQRYAEAKYRIFMNQQAGDTFIYNQDDSMLQAAFGASQIAVPCRSVAFGLEPLTNVQLDKRRVLVNGNMVVVRQNDGALQPIVAVDEVLNRAFRGKHNLSNVLAAVAVGEALGIGSEVMRQALTAFGGVEHRQELVATIDGVEWINDSKATNVNAMRQALEAVPAPMILIAGGRDKGNNYATVSHLIERKVCLLIATGESREKLASFFKGKVPVIAVPTIDEAVAIAHQQAKAGESVLFSPACASFDMFNNFEERGAFFKQCVRQVL.

112–118 serves as a coordination point for ATP; that stretch reads GTDGKTT.

This sequence belongs to the MurCDEF family.

The protein resides in the cytoplasm. The enzyme catalyses UDP-N-acetyl-alpha-D-muramoyl-L-alanine + D-glutamate + ATP = UDP-N-acetyl-alpha-D-muramoyl-L-alanyl-D-glutamate + ADP + phosphate + H(+). It functions in the pathway cell wall biogenesis; peptidoglycan biosynthesis. Cell wall formation. Catalyzes the addition of glutamate to the nucleotide precursor UDP-N-acetylmuramoyl-L-alanine (UMA). The polypeptide is UDP-N-acetylmuramoylalanine--D-glutamate ligase (Chlorobium chlorochromatii (strain CaD3)).